A 734-amino-acid polypeptide reads, in one-letter code: Photosystem I P700 chlorophyll a apoprotein A2 (734 aa).

The next 8 helical transmembrane spans lie at 46-69, 135-158, 175-199, 273-291, 330-353, 369-395, 417-439, and 517-535; these read IFAS…FHVA, LYTG…LHLQ, LNHH…HVAI, VAHH…GLMY, IHFQ…QHMY, AALY…IFFI, AIIS…LYVH, and FLVH…LILV. The [4Fe-4S] cluster site is built by cysteine 559 and cysteine 568. 2 helical membrane-spanning segments follow: residues 575–596 and 643–665; these read DFYL…YWHW and LSVW…MFLI. 3 residues coordinate chlorophyll a: histidine 654, methionine 662, and tyrosine 670. Tryptophan 671 provides a ligand contact to phylloquinone. The chain crosses the membrane as a helical span at residues 707–727; sequence LVGLVHFSVGYIFTYAAFLIA.

The protein belongs to the PsaA/PsaB family. As to quaternary structure, the PsaA/B heterodimer binds the P700 chlorophyll special pair and subsequent electron acceptors. PSI consists of a core antenna complex that captures photons, and an electron transfer chain that converts photonic excitation into a charge separation. The eukaryotic PSI reaction center is composed of at least 11 subunits. Requires P700 is a chlorophyll a/chlorophyll a' dimer, A0 is one or more chlorophyll a, A1 is one or both phylloquinones and FX is a shared 4Fe-4S iron-sulfur center. as cofactor.

It localises to the plastid. The protein resides in the chloroplast thylakoid membrane. It catalyses the reaction reduced [plastocyanin] + hnu + oxidized [2Fe-2S]-[ferredoxin] = oxidized [plastocyanin] + reduced [2Fe-2S]-[ferredoxin]. Functionally, psaA and PsaB bind P700, the primary electron donor of photosystem I (PSI), as well as the electron acceptors A0, A1 and FX. PSI is a plastocyanin-ferredoxin oxidoreductase, converting photonic excitation into a charge separation, which transfers an electron from the donor P700 chlorophyll pair to the spectroscopically characterized acceptors A0, A1, FX, FA and FB in turn. Oxidized P700 is reduced on the lumenal side of the thylakoid membrane by plastocyanin. The sequence is that of Photosystem I P700 chlorophyll a apoprotein A2 from Pisum sativum (Garden pea).